We begin with the raw amino-acid sequence, 303 residues long: Probable 5-dehydro-4-deoxyglucarate dehydratase (303 aa).

Belongs to the DapA family.

The catalysed reaction is 5-dehydro-4-deoxy-D-glucarate + H(+) = 2,5-dioxopentanoate + CO2 + H2O. The protein operates within carbohydrate acid metabolism; D-glucarate degradation; 2,5-dioxopentanoate from D-glucarate: step 2/2. This chain is Probable 5-dehydro-4-deoxyglucarate dehydratase, found in Pseudomonas putida (strain ATCC 700007 / DSM 6899 / JCM 31910 / BCRC 17059 / LMG 24140 / F1).